Here is a 215-residue protein sequence, read N- to C-terminus: Adenylate kinase (215 aa).

Residue 10 to 15 coordinates ATP; the sequence is GSGKGT. The tract at residues 30–59 is NMP; sequence STGDLFRTNIENDTPLGKEIKQIVENGQLV. AMP contacts are provided by residues T31, R36, 57–59, 85–88, and Q92; these read QLV and GFPR. The interval 121–158 is LID; the sequence is GRRICQSCCKIFNIYTLPTKEKEICDFCQGILYQRKDD. Residue R122 coordinates ATP. The Zn(2+) site is built by C125 and C128. Residue 131 to 132 participates in ATP binding; that stretch reads IF. Residues C145 and C148 each coordinate Zn(2+). 2 residues coordinate AMP: R155 and R166. Residue K194 coordinates ATP.

Belongs to the adenylate kinase family. Monomer.

Its subcellular location is the cytoplasm. It catalyses the reaction AMP + ATP = 2 ADP. The protein operates within purine metabolism; AMP biosynthesis via salvage pathway; AMP from ADP: step 1/1. Catalyzes the reversible transfer of the terminal phosphate group between ATP and AMP. Plays an important role in cellular energy homeostasis and in adenine nucleotide metabolism. The protein is Adenylate kinase of Borrelia recurrentis (strain A1).